The chain runs to 188 residues: Ion-translocating oxidoreductase complex subunit B (188 aa).

The tract at residues 1–26 (MNGVLLAIGVLLPICLASGALLGYAA) is hydrophobic. The 59-residue stretch at 32-90 (QGDPVAERVNALLPQTQCGQCGYPGCKPYAEAIAAGDRINKCPPGGEATIQALADLLDL) folds into the 4Fe-4S domain. Positions 49, 52, 57, 73, 113, 116, 119, 123, 143, 146, 149, and 153 each coordinate [4Fe-4S] cluster. 4Fe-4S ferredoxin-type domains follow at residues 104–133 (RVAYIREAECIGCTKCIQACPVDAIVGAAR) and 134–163 (LMHTVIADECTGCDLCLEPCPVDCIEMREI).

Belongs to the 4Fe4S bacterial-type ferredoxin family. RnfB subfamily. The complex is composed of six subunits: RnfA, RnfB, RnfC, RnfD, RnfE and RnfG. The cofactor is [4Fe-4S] cluster.

The protein resides in the cell inner membrane. In terms of biological role, part of a membrane-bound complex that couples electron transfer with translocation of ions across the membrane. The chain is Ion-translocating oxidoreductase complex subunit B from Pseudomonas paraeruginosa (strain DSM 24068 / PA7) (Pseudomonas aeruginosa (strain PA7)).